The following is a 226-amino-acid chain: Probable N-acetyl-alpha-D-glucosaminyl L-malate deacetylase 2 (226 aa).

Residues His13, Asp16, and His127 each coordinate Zn(2+).

The protein belongs to the PIGL family. The cofactor is Zn(2+).

It carries out the reaction (S)-malyl N-acetyl-alpha-D-glucosaminide + H2O = (S)-malyl alpha-D-glucosaminide + acetate. Functionally, involved in bacillithiol (BSH) biosynthesis. Catalyzes the second step of the pathway, the deacetylation of N-acetylglucosaminylmalate (GlcNAc-Mal) to glucosamine malate (GlcN-Mal). Could also be involved in bacillithiol-detoxifying pathways through formation of S-mercapturic adducts. This chain is Probable N-acetyl-alpha-D-glucosaminyl L-malate deacetylase 2, found in Bacillus anthracis.